The following is a 426-amino-acid chain: Serine--tRNA ligase (426 aa).

233-235 provides a ligand contact to L-serine; sequence TAE. 264-266 is an ATP binding site; sequence RSE. Residue Glu287 coordinates L-serine. ATP is bound at residue 351–354; the sequence is EISS. Residue Ser387 coordinates L-serine.

It belongs to the class-II aminoacyl-tRNA synthetase family. Type-1 seryl-tRNA synthetase subfamily. As to quaternary structure, homodimer. The tRNA molecule binds across the dimer.

The protein localises to the cytoplasm. It catalyses the reaction tRNA(Ser) + L-serine + ATP = L-seryl-tRNA(Ser) + AMP + diphosphate + H(+). The enzyme catalyses tRNA(Sec) + L-serine + ATP = L-seryl-tRNA(Sec) + AMP + diphosphate + H(+). It participates in aminoacyl-tRNA biosynthesis; selenocysteinyl-tRNA(Sec) biosynthesis; L-seryl-tRNA(Sec) from L-serine and tRNA(Sec): step 1/1. Its function is as follows. Catalyzes the attachment of serine to tRNA(Ser). Is also able to aminoacylate tRNA(Sec) with serine, to form the misacylated tRNA L-seryl-tRNA(Sec), which will be further converted into selenocysteinyl-tRNA(Sec). The sequence is that of Serine--tRNA ligase from Ectopseudomonas mendocina (strain ymp) (Pseudomonas mendocina).